Here is a 311-residue protein sequence, read N- to C-terminus: Formimidoylglutamase (311 aa).

6 residues coordinate Mn(2+): H122, D151, H153, D155, C242, and D244.

Belongs to the arginase family. In terms of assembly, homodimer. Mn(2+) is required as a cofactor.

It catalyses the reaction N-formimidoyl-L-glutamate + H2O = formamide + L-glutamate. It functions in the pathway amino-acid degradation; L-histidine degradation into L-glutamate; L-glutamate from N-formimidoyl-L-glutamate (hydrolase route): step 1/1. In terms of biological role, catalyzes the conversion of N-formimidoyl-L-glutamate to L-glutamate and formamide. This Pseudomonas aeruginosa (strain ATCC 15692 / DSM 22644 / CIP 104116 / JCM 14847 / LMG 12228 / 1C / PRS 101 / PAO1) protein is Formimidoylglutamase.